The primary structure comprises 455 residues: MKIFRCCFKYTLQQKLFILLLTLWLFSLLKLLNVGRLLFPQRDIYLVEYSLSTSPFVRNRFPESGDAARDNVNCSGVYEHEPLEIGKSLEIRRRSIIDLEDGDVVAMTSDCDVYQTLRQYHEKLVSREEEDFPIAYSLVVHKDAIMVERLIRAIYNQHNLYCIHYDLKSPDTFKAAMNNLAKCFPNIFIASKLETVEYAHISRLQADWNCLSDLLKSSVQWKYVINLCGQDFPLKSNFELVTELKSLQGRNMLETVRPPSAKTERFTYHHELRQVPYDYMKLPVKTNVSKGAPPHNIQVFVGSAYFVLSRAFVKYIFNSSLVEDFFAWSKDTYSPDEHFWATLIRIPGIPGGISSSSQDVSDLQSKTRLVKWFYYEGFLYPNCTGSHLRSVCIYGAAELRWLLNEGHWFANKFDSKVDPILMKCLAEKLEEQQRKLIALSSEKFMTEGTRQSHTL.

The Cytoplasmic portion of the chain corresponds to 1–13; the sequence is MKIFRCCFKYTLQ. The chain crosses the membrane as a helical; Signal-anchor for type II membrane protein span at residues 14 to 34; sequence QKLFILLLTLWLFSLLKLLNV. The Lumenal portion of the chain corresponds to 35 to 455; the sequence is GRLLFPQRDI…TEGTRQSHTL (421 aa). Residue asparagine 73 is glycosylated (N-linked (GlcNAc...) asparagine). 4 cysteine pairs are disulfide-bonded: cysteine 74/cysteine 228, cysteine 162/cysteine 383, cysteine 183/cysteine 210, and cysteine 392/cysteine 424. N-linked (GlcNAc...) asparagine glycosylation is found at asparagine 287 and asparagine 382.

The protein belongs to the glycosyltransferase 14 family.

The protein resides in the golgi apparatus membrane. It catalyses the reaction a 3-O-[beta-D-galactosyl-(1-&gt;3)-N-acetyl-alpha-D-galactosaminyl]-L-seryl-[protein] + UDP-N-acetyl-alpha-D-glucosamine = 3-O-{beta-D-galactosyl-(1-&gt;3)-[N-acetyl-beta-D-glucosaminyl-(1-&gt;6)]-N-acetyl-alpha-D-galactosaminyl}-L-seryl-[protein] + UDP + H(+). It carries out the reaction a 3-O-[beta-D-galactosyl-(1-&gt;3)-N-acetyl-alpha-D-galactosaminyl]-L-threonyl-[protein] + UDP-N-acetyl-alpha-D-glucosamine = a 3-O-{beta-D-galactosyl-(1-&gt;3)-[N-acetyl-beta-D-glucosaminyl-(1-&gt;6)]-N-acetyl-alpha-D-galactosaminyl}-L-threonyl-[protein] + UDP + H(+). It functions in the pathway protein modification; protein glycosylation. Glycosyltransferase that mediates core 2 O-glycan branching, an important step in mucin-type biosynthesis. Does not have core 4 O-glycan or I-branching enzyme activity. This is Beta-1,3-galactosyl-O-glycosyl-glycoprotein beta-1,6-N-acetylglucosaminyltransferase 4 (Gcnt4) from Mus musculus (Mouse).